A 462-amino-acid polypeptide reads, in one-letter code: MQEGKISQIIGPVVDVDFPEGRLPSILDALTVTRADGTKLVLETQQHLGEERVRTVAMESTDGLVRGMNVTHTGKPIQVPVGLEVLGRMLNVVGDPIDGRGPVNTKKSYSIHRLAPRFDEISTKAEMFETGIKVIDLLEPYSRGGKTGLFGGAGVGKTVLIMELINNIAKQQSGFSVFAGVGERTREGNDLWHEMMESGVIDKTALVFGQMNEPPGARQRVALTGLSIAEYFRDEEGRDVLLFIDNIFRFTQAGSEVSALLGRMPSAVGYQPTLATEMGELQDRIVSTKKGSVTSVQAIYVPADDLTDPAPATAFAHLDATTVLSRSIAELGIYPAVDPLDSTSRILDPNIVGDDHYDTAQAVKQLLQRYKDLQDIIAILGMDELSDEDKLVVSRARKVQRFLSQPFFVAEAFTGLAGKYVKLEETIKGFKEIIAGRHDNLPESAFYLVGTIEEAVEKAKTL.

151-158 (GGAGVGKT) contributes to the ATP binding site.

This sequence belongs to the ATPase alpha/beta chains family. As to quaternary structure, F-type ATPases have 2 components, CF(1) - the catalytic core - and CF(0) - the membrane proton channel. CF(1) has five subunits: alpha(3), beta(3), gamma(1), delta(1), epsilon(1). CF(0) has four main subunits: a(1), b(1), b'(1) and c(9-12).

The protein localises to the cell inner membrane. It catalyses the reaction ATP + H2O + 4 H(+)(in) = ADP + phosphate + 5 H(+)(out). Its function is as follows. Produces ATP from ADP in the presence of a proton gradient across the membrane. The catalytic sites are hosted primarily by the beta subunits. This chain is ATP synthase subunit beta, found in Pelodictyon phaeoclathratiforme (strain DSM 5477 / BU-1).